We begin with the raw amino-acid sequence, 171 residues long: Nicotinamide-nucleotide adenylyltransferase (171 aa).

This sequence belongs to the archaeal NMN adenylyltransferase family.

It is found in the cytoplasm. The catalysed reaction is beta-nicotinamide D-ribonucleotide + ATP + H(+) = diphosphate + NAD(+). The protein operates within cofactor biosynthesis; NAD(+) biosynthesis; NAD(+) from nicotinamide D-ribonucleotide: step 1/1. The chain is Nicotinamide-nucleotide adenylyltransferase from Methanococcus maripaludis (strain C6 / ATCC BAA-1332).